We begin with the raw amino-acid sequence, 117 residues long: UPF0102 protein FTF0898c (117 aa).

Belongs to the UPF0102 family.

This Francisella tularensis subsp. tularensis (strain FSC 198) protein is UPF0102 protein FTF0898c.